Reading from the N-terminus, the 193-residue chain is FMN-dependent NADH:quinone oxidoreductase 1 (193 aa).

Residues Ser-9, Ser-15 to Ser-17, and Met-85 to Phe-88 each bind FMN.

Belongs to the azoreductase type 1 family. As to quaternary structure, homodimer. The cofactor is FMN.

The enzyme catalyses 2 a quinone + NADH + H(+) = 2 a 1,4-benzosemiquinone + NAD(+). It catalyses the reaction N,N-dimethyl-1,4-phenylenediamine + anthranilate + 2 NAD(+) = 2-(4-dimethylaminophenyl)diazenylbenzoate + 2 NADH + 2 H(+). Its function is as follows. Quinone reductase that provides resistance to thiol-specific stress caused by electrophilic quinones. In terms of biological role, also exhibits azoreductase activity. Catalyzes the reductive cleavage of the azo bond in aromatic azo compounds to the corresponding amines. The chain is FMN-dependent NADH:quinone oxidoreductase 1 from Xanthomonas axonopodis pv. citri (strain 306).